We begin with the raw amino-acid sequence, 104 residues long: Snakin-2 (104 aa).

A signal peptide spans 1 to 23; that stretch reads MAISKALFASLLLSLLLLEQVQS. Positions 24-38 are cleaved as a propeptide — removed in mature form; it reads IQTDQVTSNAISEAA.

This sequence belongs to the GASA family. Six disulfide bonds may be present. Expressed in tubers, stems, flowers, shoot apex and leaves, but not in roots or stolons.

The protein localises to the secreted. It is found in the cell wall. Its function is as follows. Has an antimicrobial activity. Causes a rapid aggregation of both Gram-positive and Gram-negative bacteria, but the antimicrobial activity is not correlated with the capacity to aggregate bacteria. In Solanum tuberosum (Potato), this protein is Snakin-2 (SN2).